The chain runs to 930 residues: MAGKARVHELAKELGVTSKEVLARLGEQGEFVKSASSTVEAPVARRLRESFGGNKPDAVKPAAGASNGAPAKPSAPGARPGPRPGPPAPAQPKEPPAPAAPAAAAPAPAAPAPPAAPPAPAASAAPPSAPEAPSARPTPGPRPGPGGPKPGAPKPAPRTPRVGNNPFSSQQPVERPAPRPQGPAGPGGPRPGPGAGGPRPGGGPRPGATPGNMPPRPVGGPRPGGGPRPGGGPRPGAGPRPTPGGAGRPGGGGGGNYRGGGAGGGGGAGGAAAGGFRGRPGGGGGRPGQRGGAAGAFGRPGGAPKRGRKSKRAKRAEYENMQAPVVGGVRLPHGNGETIRLARGASLSDFADKINANPASLVQALFNLGEMVTATQSVNDETLELLGGEMNYVVQVVSPEDEDRELLQSFDLSYGEDEGGEDDLEFRPPVVTVMGHVDHGKTRLLDTIRDATVREGEAGGITQHIGAYQVTVDLDGNERPITFIDTPGHEAFTAMRARGAKATDIAILVVAADDGVMPQTVEAVNHAQAADVPIVVAVNKIDKEGADPAKIRGQLTEYGLVPEEYGGDTMFVDISAKAGTNIEALLEAVVLTADASLDLRANPDMEAQGVAIEAHLDRGRGPVATVLIQRGTLRVGDSVVAGDAYGRVRRMVDEHGEDVEEALPSRPVQVIGFTSVPGAGDNFLVVDEDRIARQIADRRSARKRNALAARTRKRISLEDLDSALKETSQLNLILKGDNSGTVEALEEALLGIQVDDEVQLRVIDRGVGGVTETNVNLASASDAIIIGFNVRAEGKATELANREGVEIRYYSIIYQAIDEIESALKGMLKPIYEEKELGRAEIRAIFRSSKVGNIAGCLVQSGIMRRNAKARLLRDNVVVAQNLTVSSLKREKDDATEVREGYECGLTLTYNDIKEGDVIETYELVEKART.

Positions 31 to 317 (FVKSASSTVE…RKSKRAKRAE (287 aa)) are disordered. Over residues 61–78 (PAAGASNGAPAKPSAPGA) the composition is skewed to low complexity. 2 stretches are compositionally biased toward pro residues: residues 79–99 (RPGP…PAPA) and 108–120 (PAAP…PPAP). A compositionally biased stretch (low complexity) spans 121 to 135 (AASAAPPSAPEAPSA). Composition is skewed to pro residues over residues 136–158 (RPTP…PAPR) and 178–192 (PRPQ…PRPG). Residues 193–205 (PGAGGPRPGGGPR) are compositionally biased toward gly residues. Residues 212–242 (NMPPRPVGGPRPGGGPRPGGGPRPGAGPRPT) are compositionally biased toward pro residues. Residues 244–301 (GGAGRPGGGGGGNYRGGGAGGGGGAGGAAAGGFRGRPGGGGGRPGQRGGAAGAFGRPG) show a composition bias toward gly residues. The segment covering 305 to 314 (KRGRKSKRAK) has biased composition (basic residues). Residues 426–598 (FRPPVVTVMG…VVLTADASLD (173 aa)) form the tr-type G domain. The interval 435-442 (GHVDHGKT) is G1. 435 to 442 (GHVDHGKT) serves as a coordination point for GTP. The tract at residues 460 to 464 (GITQH) is G2. The tract at residues 485–488 (DTPG) is G3. Residues 485–489 (DTPGH) and 539–542 (NKID) contribute to the GTP site. Residues 539–542 (NKID) form a G4 region. A G5 region spans residues 575 to 577 (SAK).

It belongs to the TRAFAC class translation factor GTPase superfamily. Classic translation factor GTPase family. IF-2 subfamily.

It localises to the cytoplasm. Functionally, one of the essential components for the initiation of protein synthesis. Protects formylmethionyl-tRNA from spontaneous hydrolysis and promotes its binding to the 30S ribosomal subunits. Also involved in the hydrolysis of GTP during the formation of the 70S ribosomal complex. The chain is Translation initiation factor IF-2 from Mycolicibacterium gilvum (strain PYR-GCK) (Mycobacterium gilvum (strain PYR-GCK)).